The primary structure comprises 257 residues: Molybdate-binding protein ModA (257 aa).

An N-terminal signal peptide occupies residues 1-24 (MARKWLNLFAGAALSFAVAGNALA). Molybdate contacts are provided by S36, S63, A149, V176, and Y194.

It belongs to the bacterial solute-binding protein ModA family. In terms of assembly, the complex is composed of two ATP-binding proteins (ModC), two transmembrane proteins (ModB) and a solute-binding protein (ModA).

It localises to the periplasm. Its function is as follows. Part of the ABC transporter complex ModABC involved in the transport of molybdenum into the cell. Binds molybdate with high affinity in vitro and with a similar affinity in vivo. Binds tungstate with high affinity in vitro. Binds unnatural anion perrhenate with high affinity in vitro. Does not bind sulfate, phosphate, arsenate, selenate, chlorate, metavanadate, nitrate, perchlorate, permanganate or carbonate. The sequence is that of Molybdate-binding protein ModA (modA) from Escherichia coli (strain K12).